Reading from the N-terminus, the 224-residue chain is Transposase for insertion sequence element IS257 in transposon Tn4003 (224 aa).

Positions 33–52 (EILRGRGVNVHHSTVYRWVQ) form a DNA-binding region, H-T-H motif. The Integrase catalytic domain occupies 73–222 (WRIDETYIKI…SPCHEISIML (150 aa)).

Its function is as follows. Involved in the transposition of the insertion sequence. The chain is Transposase for insertion sequence element IS257 in transposon Tn4003 from Staphylococcus aureus.